Here is a 319-residue protein sequence, read N- to C-terminus: MDKNLHQPLGGNEMPRFGGIATMMRLPHVQSPAELDALDAAFVGVPLDIGTSLRSGTRFGPREIRAESVMIRPYNMATGAAPFDSLNVADIGDVAINTFNLLEAVRIIEQEYDRILGHGILPLTLGGDHTITLPILRAIKKKHGKVGLVHVDAHADVNDHMFGEKIAHGTTFRRAVEEDLLDCDRVVQIGLRAQGYTAEDFNWSRKQGFRVVQAEECWHKSLEPLMAEVREKVGGGPVYLSFDIDGIDPAWAPGTGTPEIGGLTTIQAMEIIRGCQGLDLIGCDLVEVSPPYDTTGNTSLLGANLLYEMLCVLPGVVRR.

Residues His-129, Asp-152, His-154, Asp-156, Asp-243, and Asp-245 each contribute to the Mn(2+) site.

Belongs to the arginase family. Agmatinase subfamily. As to quaternary structure, homohexamer. It depends on Mn(2+) as a cofactor.

The catalysed reaction is 4-guanidinobutanoate + H2O = urea + 4-aminobutanoate. In terms of biological role, catalyzes specifically the hydrolysis of 4-guanidinobutanoate to 4-aminobutanoate and urea. Has no activity against arginine, agmatine, 3-guanidinopropionate and guanidinoacetate. The protein is Guanidinobutyrase (gbuA) of Pseudomonas aeruginosa (strain ATCC 15692 / DSM 22644 / CIP 104116 / JCM 14847 / LMG 12228 / 1C / PRS 101 / PAO1).